The chain runs to 382 residues: MSQSNNVTDLARANIRALTPYMSARRLGGNGDVWLNANEYPLGTEYQLTTQTFNRYPECQPKHVIERYAAYAGLPPEQVLVSRGADEGIELLIRAFCEPGQDAILFCPPTYGMYAVSAETFGVERRTVPAQADWQLDLPAIANNLEQVKVIYVCSPNNPTGNLINPADLQAVLALAQGRAIVAIDEAYIEFCPQASVSNWLKDYPNLVILRTLSKAFALAGLRCGFTLANSDIIQLLLKVIAPYPLSTPVADIAAQALSPQGIEQMRQRVSEVRANRAWLQSALQDCACVEQVFTSESNYLLVRFTASSSVFKVLWDQGIILRDQNKQPGLANCLRITIGTRQECERVIAALAPLAGIDNSNNIDNQSKTHSQTSSIRKGTI.

The residue at position 215 (Lys215) is an N6-(pyridoxal phosphate)lysine. Residues 363-382 (NIDNQSKTHSQTSSIRKGTI) are disordered.

The protein belongs to the class-II pyridoxal-phosphate-dependent aminotransferase family. Histidinol-phosphate aminotransferase subfamily. Homodimer. The cofactor is pyridoxal 5'-phosphate.

It catalyses the reaction L-histidinol phosphate + 2-oxoglutarate = 3-(imidazol-4-yl)-2-oxopropyl phosphate + L-glutamate. The protein operates within amino-acid biosynthesis; L-histidine biosynthesis; L-histidine from 5-phospho-alpha-D-ribose 1-diphosphate: step 7/9. The polypeptide is Histidinol-phosphate aminotransferase (Yersinia pseudotuberculosis serotype O:1b (strain IP 31758)).